Consider the following 104-residue polypeptide: N(4)-acetylcytidine amidohydrolase (104 aa).

In terms of domain architecture, ASCH spans 6–102 (ITFYQRFEAD…SEFWVIEIRL (97 aa)). Lysine 21 acts as the Proton acceptor in catalysis. Catalysis depends on threonine 24, which acts as the Nucleophile. Glutamate 74 acts as the Proton donor in catalysis.

The protein belongs to the N(4)-acetylcytidine amidohydrolase family.

It carries out the reaction N(4)-acetylcytidine + H2O = cytidine + acetate + H(+). The catalysed reaction is N(4)-acetyl-2'-deoxycytidine + H2O = 2'-deoxycytidine + acetate + H(+). The enzyme catalyses N(4)-acetylcytosine + H2O = cytosine + acetate + H(+). In terms of biological role, catalyzes the hydrolysis of N(4)-acetylcytidine (ac4C). The sequence is that of N(4)-acetylcytidine amidohydrolase from Haemophilus influenzae (strain PittEE).